Reading from the N-terminus, the 919-residue chain is Alanine--tRNA ligase (919 aa).

Positions 565, 569, 667, and 671 each coordinate Zn(2+).

Belongs to the class-II aminoacyl-tRNA synthetase family. Requires Zn(2+) as cofactor.

The protein resides in the cytoplasm. The catalysed reaction is tRNA(Ala) + L-alanine + ATP = L-alanyl-tRNA(Ala) + AMP + diphosphate. Functionally, catalyzes the attachment of alanine to tRNA(Ala) in a two-step reaction: alanine is first activated by ATP to form Ala-AMP and then transferred to the acceptor end of tRNA(Ala). Also edits incorrectly charged Ser-tRNA(Ala) and Gly-tRNA(Ala) via its editing domain. This Leptospira biflexa serovar Patoc (strain Patoc 1 / Ames) protein is Alanine--tRNA ligase.